A 1757-amino-acid chain; its full sequence is E3 ubiquitin-protein ligase UBR1 (1757 aa).

A disordered region spans residues 1 to 24; the sequence is MADEEMDGAERMDVSPEPPLAPQR. The residue at position 2 (alanine 2) is an N-acetylalanine. The UBR-type zinc finger occupies 97–168; that stretch reads QLCGKVFKSG…TGPFCVDHEP (72 aa). Residues cysteine 99, cysteine 112, cysteine 115, cysteine 124, cysteine 127, histidine 133, and histidine 136 each contribute to the Zn(2+) site. Phenylalanine 148 is an a peptide binding site. Cysteine 149 provides a ligand contact to Zn(2+). Aspartate 150 is an a peptide binding site. Cysteine 151 is a binding site for Zn(2+). Aspartate 153 is a binding site for a peptide. Zn(2+) contacts are provided by cysteine 163 and histidine 166. The tract at residues 842-868 is disordered; that stretch reads QHSKAEHMQKKRRKQENKDEALPPPPP. The interval 1022–1057 is UBC2-binding region (U2BR); the sequence is RKRKAEAARLHRQKIMAQMSALQKNFIETHKLMYDN. Positions 1101, 1104, 1162, 1164, 1167, and 1170 each coordinate Zn(2+). The RING-type; atypical zinc finger occupies 1101 to 1204; sequence CILCQEEQEV…SGEYLCPLCK (104 aa). Residue serine 1182 is modified to Phosphoserine. Zn(2+) is bound by residues cysteine 1200, cysteine 1203, cysteine 1635, cysteine 1638, and cysteine 1661.

This sequence belongs to the E3 ubiquitin-protein ligase UBR1-like family. Interacts with RECQL4. Present in skeletal muscle and liver (at protein level). Broadly expressed, with highest levels in skeletal muscle and heart. Expressed in acinar cells of the pancreas. In testes, expressed primarily in spermatogonia.

It localises to the cytoplasm. Its subcellular location is the cytosol. The catalysed reaction is S-ubiquitinyl-[E2 ubiquitin-conjugating enzyme]-L-cysteine + [acceptor protein]-L-lysine = [E2 ubiquitin-conjugating enzyme]-L-cysteine + N(6)-ubiquitinyl-[acceptor protein]-L-lysine.. Its pathway is protein modification; protein ubiquitination. E3 ubiquitin-protein ligase which is a component of the N-end rule pathway. Recognizes and binds proteins bearing specific N-terminal residues (N-degrons) that are destabilizing according to the N-end rule, leading to their ubiquitination and subsequent degradation. Recognizes both type-1 and type-2 N-degrons, containing positively charged amino acids (Arg, Lys and His) and bulky and hydrophobic amino acids, respectively. Does not ubiquitinate proteins that are acetylated at the N-terminus. In contrast, it strongly binds methylated N-degrons. Binds leucine and is a negative regulator of the leucine-mTOR signaling pathway, thereby controlling cell growth. The chain is E3 ubiquitin-protein ligase UBR1 from Mus musculus (Mouse).